Consider the following 211-residue polypeptide: Outer-membrane lipoprotein carrier protein (211 aa).

The first 24 residues, 1–24, serve as a signal peptide directing secretion; sequence MNTIKILIGLLGIFLFSLSGIVSA.

It belongs to the LolA family. As to quaternary structure, monomer.

It is found in the periplasm. In terms of biological role, participates in the translocation of lipoproteins from the inner membrane to the outer membrane. Only forms a complex with a lipoprotein if the residue after the N-terminal Cys is not an aspartate (The Asp acts as a targeting signal to indicate that the lipoprotein should stay in the inner membrane). The protein is Outer-membrane lipoprotein carrier protein of Coxiella burnetii (strain CbuK_Q154) (Coxiella burnetii (strain Q154)).